The following is a 320-amino-acid chain: MIKKIGVLTSGGDSPGMNAAIRGVVRAGLSEGIEVYGIYDGYLGLFQNRMMLLSYCSVSDIINKGGTVLGSSRFPELKKDMIRSVVMNNISKSHLDALVIIGGDGSYIGARRLSDLGCPCIGIPGTIDNDVAGTDYTIGYFTALETIIEAIDRLRDTSSSHQRISIVEVMGRYCGDLTISAAIAGGCEFVIIPELKFQMQDLVDKIKLNISKGKKHAIVAITERICNVFDLAQYIENETGKETRATVLGHIQRGGKPVAYDRILASRMGAYSIELLLKGYGRHCIGIENEKLVHHDINDATKYMRRSFRQDLLTTAKKLC.

Position 12 (glycine 12) interacts with ATP. Position 22–26 (22–26) interacts with ADP; the sequence is RGVVR. ATP is bound by residues 73 to 74 and 103 to 106; these read RF and GDGS. Aspartate 104 serves as a coordination point for Mg(2+). Position 126–128 (126–128) interacts with substrate; sequence TID. The Proton acceptor role is filled by aspartate 128. Position 155 (arginine 155) interacts with ADP. Substrate is bound by residues arginine 163 and 170-172; that span reads MGR. ADP-binding positions include 186 to 188, lysine 212, and 214 to 216; these read GCE and KKH. Substrate-binding positions include glutamate 223, arginine 244, and 250–253; that span reads HIQR.

Belongs to the phosphofructokinase type A (PFKA) family. ATP-dependent PFK group I subfamily. Prokaryotic clade 'B1' sub-subfamily. As to quaternary structure, homotetramer. It depends on Mg(2+) as a cofactor.

Its subcellular location is the cytoplasm. The enzyme catalyses beta-D-fructose 6-phosphate + ATP = beta-D-fructose 1,6-bisphosphate + ADP + H(+). It participates in carbohydrate degradation; glycolysis; D-glyceraldehyde 3-phosphate and glycerone phosphate from D-glucose: step 3/4. Its activity is regulated as follows. Allosterically activated by ADP and other diphosphonucleosides, and allosterically inhibited by phosphoenolpyruvate. Functionally, catalyzes the phosphorylation of D-fructose 6-phosphate to fructose 1,6-bisphosphate by ATP, the first committing step of glycolysis. The sequence is that of ATP-dependent 6-phosphofructokinase from Blochmanniella floridana.